The sequence spans 313 residues: GTP cyclohydrolase MptA (313 aa).

Belongs to the GTP cyclohydrolase IV family. In terms of assembly, homodimer. Requires Fe(2+) as cofactor.

It catalyses the reaction GTP + H2O = 7,8-dihydroneopterin 2',3'-cyclic phosphate + formate + diphosphate + H(+). It participates in cofactor biosynthesis; 5,6,7,8-tetrahydromethanopterin biosynthesis. In terms of biological role, converts GTP to 7,8-dihydro-D-neopterin 2',3'-cyclic phosphate, the first intermediate in the biosynthesis of coenzyme methanopterin. This Methanoculleus marisnigri (strain ATCC 35101 / DSM 1498 / JR1) protein is GTP cyclohydrolase MptA.